Consider the following 300-residue polypeptide: Arginine/serine-rich protein 1 (300 aa).

Positions 1-142 (MSSAAVSKYV…RGRSHHRRSY (142 aa)) are disordered. S17 carries the phosphoserine modification. The span at 23 to 36 (SPSTSGSGRSSRLS) shows a compositional bias: low complexity. A compositionally biased stretch (basic residues) spans 37-104 (SRSRSRSSSR…RSRSRSRGHR (68 aa)). A compositionally biased stretch (basic and acidic residues) spans 105-115 (YYRDSRYEQPR). The segment covering 116-125 (RYYQSPSPYR) has biased composition (low complexity). Phosphoserine is present on residues S120 and S122. A compositionally biased stretch (basic residues) spans 126–141 (SRSRSRSRGRSHHRRS). Omega-N-methylarginine is present on R147. A disordered region spans residues 222 to 300 (QGAVSCSGPK…KSPYGLWIPV (79 aa)). Over residues 268–277 (PLEKTTKAAV) the composition is skewed to basic and acidic residues. Position 284 is a phosphoserine (S284).

The protein belongs to the RSRP family. In terms of processing, phosphorylated. Phosphorylation at Ser-120 and Ser-122 mediates the interaction with spliceosome proteins.

The protein resides in the nucleus. Probably acts as a spliceosomal factor that contributes to spliceosome assembly and regulates the isoform switching of proteins such as PARP6. This Rattus norvegicus (Rat) protein is Arginine/serine-rich protein 1 (Rsrp1).